The primary structure comprises 600 residues: UvrABC system protein C (600 aa).

The region spanning 15 to 92 (DKPGCYLMKD…IKKYQPYYNV (78 aa)) is the GIY-YIG domain. A UVR domain is found at 197–232 (SQVKQDLTEKMTQASMNLEFERAAEFRDQLKYIEQT).

The protein belongs to the UvrC family. In terms of assembly, interacts with UvrB in an incision complex.

Its subcellular location is the cytoplasm. The UvrABC repair system catalyzes the recognition and processing of DNA lesions. UvrC both incises the 5' and 3' sides of the lesion. The N-terminal half is responsible for the 3' incision and the C-terminal half is responsible for the 5' incision. The polypeptide is UvrABC system protein C (Lactobacillus gasseri (strain ATCC 33323 / DSM 20243 / BCRC 14619 / CIP 102991 / JCM 1131 / KCTC 3163 / NCIMB 11718 / NCTC 13722 / AM63)).